We begin with the raw amino-acid sequence, 188 residues long: Capsid protein (188 aa).

The protein belongs to the tymoviruses capsid protein family.

The protein resides in the virion. Self-assembles to form a T=3 icosahedral capsid composed of 180 copies of the capsid protein. The capsid encapsulates the single-stranded RNA genome. The protein is Capsid protein of Kennedya yellow mosaic virus (strain Jervis bay) (KYMV).